A 153-amino-acid polypeptide reads, in one-letter code: D-aminoacyl-tRNA deacylase (153 aa).

Residues 137–138 (GP) carry the Gly-cisPro motif, important for rejection of L-amino acids motif.

Belongs to the DTD family. Homodimer.

The protein resides in the cytoplasm. The enzyme catalyses glycyl-tRNA(Ala) + H2O = tRNA(Ala) + glycine + H(+). It catalyses the reaction a D-aminoacyl-tRNA + H2O = a tRNA + a D-alpha-amino acid + H(+). Functionally, an aminoacyl-tRNA editing enzyme that deacylates mischarged D-aminoacyl-tRNAs. Also deacylates mischarged glycyl-tRNA(Ala), protecting cells against glycine mischarging by AlaRS. Acts via tRNA-based rather than protein-based catalysis; rejects L-amino acids rather than detecting D-amino acids in the active site. By recycling D-aminoacyl-tRNA to D-amino acids and free tRNA molecules, this enzyme counteracts the toxicity associated with the formation of D-aminoacyl-tRNA entities in vivo and helps enforce protein L-homochirality. The chain is D-aminoacyl-tRNA deacylase from Methylococcus capsulatus (strain ATCC 33009 / NCIMB 11132 / Bath).